We begin with the raw amino-acid sequence, 737 residues long: Cellulose synthase-like protein E1 (737 aa).

The next 2 membrane-spanning stretches (helical) occupy residues 26–45 (AVYR…VLYY) and 58–78 (AAWL…VIAQ). Active-site residues include Asp146 and Asp451. Transmembrane regions (helical) follow at residues 528–548 (LWAA…LGLV), 551–571 (TPLF…VFCV), 654–674 (VIIA…LSQI), 683–703 (WNVF…NMPI), and 716–736 (IPTA…LVPI).

Belongs to the glycosyltransferase 2 family. Plant cellulose synthase-like E subfamily.

It is found in the golgi apparatus membrane. In terms of biological role, thought to be a Golgi-localized beta-glycan synthase that polymerize the backbones of noncellulosic polysaccharides (hemicelluloses) of plant cell wall. This chain is Cellulose synthase-like protein E1 (CSLE1), found in Oryza sativa subsp. japonica (Rice).